We begin with the raw amino-acid sequence, 1032 residues long: Unconventional myosin-Ih (1032 aa).

In terms of domain architecture, Myosin motor spans 12 to 701 (GVQDFVLLDA…TLFATEDAFE (690 aa)). Residue 105-112 (GESGAGKT) coordinates ATP. Residue Ser-365 is modified to Phosphoserine. Residues 578-600 (LSSLLETLISKEPSYIRCIKPND) form an actin-binding region. 2 consecutive IQ domains span residues 704–726 (KHQL…EYVK) and 727–756 (KRQA…AVRI). Residues 855 to 1029 (KDGYTESLNQ…NGQLTVVSVR (175 aa)) form the TH1 domain.

Belongs to the TRAFAC class myosin-kinesin ATPase superfamily. Myosin family.

In terms of biological role, myosins are actin-based motor molecules with ATPase activity. Unconventional myosins serve in intracellular movements. Their highly divergent tails are presumed to bind to membranous compartments, which would be moved relative to actin filaments. This chain is Unconventional myosin-Ih (MYO1H), found in Homo sapiens (Human).